The following is a 62-amino-acid chain: UPF0291 protein CLB_2550 (62 aa).

Belongs to the UPF0291 family.

Its subcellular location is the cytoplasm. The protein is UPF0291 protein CLB_2550 of Clostridium botulinum (strain ATCC 19397 / Type A).